The following is a 249-amino-acid chain: Isoprenyl transferase (249 aa).

D29 is an active-site residue. D29 lines the Mg(2+) pocket. Residues 30 to 33, W34, R42, H46, and 74 to 76 contribute to the substrate site; these read GNGR and STE. The Proton acceptor role is filled by N77. Substrate-binding positions include W78, R80, R197, and 203 to 205; that span reads RLS. E216 contacts Mg(2+).

It belongs to the UPP synthase family. In terms of assembly, homodimer. Requires Mg(2+) as cofactor.

Catalyzes the condensation of isopentenyl diphosphate (IPP) with allylic pyrophosphates generating different type of terpenoids. In Gloeobacter violaceus (strain ATCC 29082 / PCC 7421), this protein is Isoprenyl transferase.